We begin with the raw amino-acid sequence, 166 residues long: Phosphopantetheine adenylyltransferase (166 aa).

A substrate-binding site is contributed by threonine 11. Residues 11 to 12 and histidine 19 each bind ATP; that span reads TF. Residues lysine 43, threonine 79, and arginine 93 each contribute to the substrate site. Residues glutamate 104 and 128 to 134 each bind ATP; that span reads LEPLNST.

Belongs to the bacterial CoaD family. Homohexamer. Requires Mg(2+) as cofactor.

It is found in the cytoplasm. The enzyme catalyses (R)-4'-phosphopantetheine + ATP + H(+) = 3'-dephospho-CoA + diphosphate. It functions in the pathway cofactor biosynthesis; coenzyme A biosynthesis; CoA from (R)-pantothenate: step 4/5. Reversibly transfers an adenylyl group from ATP to 4'-phosphopantetheine, yielding dephospho-CoA (dPCoA) and pyrophosphate. This chain is Phosphopantetheine adenylyltransferase, found in Lactococcus lactis subsp. cremoris (strain MG1363).